A 257-amino-acid polypeptide reads, in one-letter code: Acetylglutamate kinase (257 aa).

Substrate contacts are provided by residues 41 to 42 (GG), Arg-63, and Asn-158.

The protein belongs to the acetylglutamate kinase family. ArgB subfamily.

The protein resides in the cytoplasm. It carries out the reaction N-acetyl-L-glutamate + ATP = N-acetyl-L-glutamyl 5-phosphate + ADP. It functions in the pathway amino-acid biosynthesis; L-arginine biosynthesis; N(2)-acetyl-L-ornithine from L-glutamate: step 2/4. Catalyzes the ATP-dependent phosphorylation of N-acetyl-L-glutamate. This is Acetylglutamate kinase from Bacteroides thetaiotaomicron (strain ATCC 29148 / DSM 2079 / JCM 5827 / CCUG 10774 / NCTC 10582 / VPI-5482 / E50).